The chain runs to 608 residues: Growth hormone receptor (608 aa).

A signal peptide spans M1 to N16. Residues D17 to E237 are Extracellular-facing. 2 disulfides stabilise this stretch: C34/C44 and C72/C83. N-linked (GlcNAc...) asparagine glycosylation occurs at N86. C97 and C111 are oxidised to a cystine. Positions P122–G226 constitute a Fibronectin type-III domain. N-linked (GlcNAc...) asparagine glycosylation is found at N127, N132, and N171. The WSXWS motif signature appears at F211–S215. Residues F238 to S261 form a helical membrane-spanning segment. At K262–P608 the chain is on the cytoplasmic side. The tract at residues K267–A352 is required for JAK2 binding. The short motif at I270–K278 is the Box 1 motif element. The short motif at D313–D322 is the UbE motif element. Composition is skewed to polar residues over residues A413–S426 and S438–S451. The tract at residues A413–S451 is disordered.

The protein belongs to the type I cytokine receptor family. Type 1 subfamily. On GH binding, proteolytically cleaved, in vitro, to produce GHBP. In terms of tissue distribution, broad specificity.

The protein localises to the cell membrane. It is found in the secreted. Its function is as follows. Receptor for pituitary gland growth hormone (GH1) involved in regulating postnatal body growth. On ligand binding, couples to the JAK2/STAT5 pathway. Functionally, the soluble form (GHBP) acts as a reservoir of growth hormone in plasma and may be a modulator/inhibitor of GH signaling. This chain is Growth hormone receptor (GHR), found in Gallus gallus (Chicken).